A 388-amino-acid polypeptide reads, in one-letter code: Venom acid phosphatase Acph-1 (388 aa).

A signal peptide spans 1–15; the sequence is MSVIAILAMVVGVQA. Histidine 26 acts as the Nucleophile in catalysis. Intrachain disulfides connect cysteine 145/cysteine 355 and cysteine 330/cysteine 334. 2 N-linked (GlcNAc...) asparagine glycosylation sites follow: asparagine 182 and asparagine 228. The Proton donor role is filled by glutamate 273. A glycan (N-linked (GlcNAc...) asparagine) is linked at asparagine 366.

Belongs to the histidine acid phosphatase family. Expressed by the venom gland.

It is found in the secreted. The enzyme catalyses a phosphate monoester + H2O = an alcohol + phosphate. The sequence is that of Venom acid phosphatase Acph-1 from Apis mellifera (Honeybee).